The sequence spans 310 residues: ADP-L-glycero-D-manno-heptose-6-epimerase (310 aa).

NADP(+) is bound by residues Leu-10–Ile-11, Asp-31–Asn-32, Lys-38, Lys-53, Glu-75–Ser-79, and Asn-92. Tyr-140 acts as the Proton acceptor in catalysis. Position 144 (Lys-144) interacts with NADP(+). Asn-169 is a substrate binding site. NADP(+) contacts are provided by Val-170 and Lys-178. Catalysis depends on Lys-178, which acts as the Proton acceptor. Substrate is bound by residues Ser-180, His-187, Phe-201–Ser-204, Arg-209, and Tyr-272.

This sequence belongs to the NAD(P)-dependent epimerase/dehydratase family. HldD subfamily. As to quaternary structure, homopentamer. It depends on NADP(+) as a cofactor.

The enzyme catalyses ADP-D-glycero-beta-D-manno-heptose = ADP-L-glycero-beta-D-manno-heptose. Its pathway is nucleotide-sugar biosynthesis; ADP-L-glycero-beta-D-manno-heptose biosynthesis; ADP-L-glycero-beta-D-manno-heptose from D-glycero-beta-D-manno-heptose 7-phosphate: step 4/4. Catalyzes the interconversion between ADP-D-glycero-beta-D-manno-heptose and ADP-L-glycero-beta-D-manno-heptose via an epimerization at carbon 6 of the heptose. This Erwinia tasmaniensis (strain DSM 17950 / CFBP 7177 / CIP 109463 / NCPPB 4357 / Et1/99) protein is ADP-L-glycero-D-manno-heptose-6-epimerase.